The primary structure comprises 484 residues: ATP synthase subunit beta (484 aa).

169 to 176 (GGAGVGKT) lines the ATP pocket.

This sequence belongs to the ATPase alpha/beta chains family. F-type ATPases have 2 components, CF(1) - the catalytic core - and CF(0) - the membrane proton channel. CF(1) has five subunits: alpha(3), beta(3), gamma(1), delta(1), epsilon(1). CF(0) has three main subunits: a(1), b(2) and c(9-12). The alpha and beta chains form an alternating ring which encloses part of the gamma chain. CF(1) is attached to CF(0) by a central stalk formed by the gamma and epsilon chains, while a peripheral stalk is formed by the delta and b chains.

The protein resides in the cell membrane. It catalyses the reaction ATP + H2O + 4 H(+)(in) = ADP + phosphate + 5 H(+)(out). Produces ATP from ADP in the presence of a proton gradient across the membrane. The catalytic sites are hosted primarily by the beta subunits. This is ATP synthase subunit beta from Cutibacterium acnes (strain DSM 16379 / KPA171202) (Propionibacterium acnes).